The chain runs to 471 residues: Cytidine and dCMP deaminase domain-containing protein 1 (471 aa).

A disordered region spans residues 1-27 (MAESNSWRSHRESDGNRSIPNGDDARN). 2 CMP/dCMP-type deaminase domains span residues 57 to 153 (LWME…LLSE) and 312 to 460 (GVIR…KLNG). The Zn(2+) site is built by histidine 99, cysteine 124, cysteine 127, and histidine 393. Residue glutamate 395 is the Proton donor of the active site. 2 residues coordinate Zn(2+): cysteine 421 and cysteine 424.

This sequence belongs to the cytidine and deoxycytidylate deaminase family. Zn(2+) is required as a cofactor.

The catalysed reaction is 2'-deoxycytidine + H2O + H(+) = 2'-deoxyuridine + NH4(+). It carries out the reaction cytidine + H2O + H(+) = uridine + NH4(+). Its function is as follows. Catalyzes the deamination of cytidine and deoxycytidine into uridine and deoxyuridine, respectively. The polypeptide is Cytidine and dCMP deaminase domain-containing protein 1 (cdadc1) (Danio rerio (Zebrafish)).